We begin with the raw amino-acid sequence, 135 residues long: Small ribosomal subunit protein uS9 (135 aa).

The segment covering 107-118 (LVGDPRRTEPHK) has biased composition (basic and acidic residues). Residues 107-135 (LVGDPRRTEPHKPNRSTKGPRAKRQKSYR) are disordered. Residues 119-135 (PNRSTKGPRAKRQKSYR) show a composition bias toward basic residues.

This sequence belongs to the universal ribosomal protein uS9 family. In terms of assembly, part of the 30S ribosomal subunit.

In Pyrococcus furiosus (strain ATCC 43587 / DSM 3638 / JCM 8422 / Vc1), this protein is Small ribosomal subunit protein uS9.